The following is a 196-amino-acid chain: MFPSGLIERPANWVALAGFMGTGKSRIGWELSRALALHFVDTDKLITRVVGKSIPEVFAQEGEGYFRACEREVVQRVTRLDHAVISLGGGTFIHEENRRLLLSRGPVVVLWATPETVYQRTKHSDRPLLKVEDPLSRIRTLMNEREGVYRQGTIHVHSDGRPSEEIVEEVVERLWAWRDAQAAWAALPPDYDRATS.

21-26 (GTGKSR) is an ATP binding site. S25 serves as a coordination point for Mg(2+). The substrate site is built by D43, R67, and G89. Residue R126 participates in ATP binding. Position 145 (R145) interacts with substrate. Residue R161 participates in ATP binding.

Belongs to the shikimate kinase family. Monomer. It depends on Mg(2+) as a cofactor.

It localises to the cytoplasm. It carries out the reaction shikimate + ATP = 3-phosphoshikimate + ADP + H(+). It functions in the pathway metabolic intermediate biosynthesis; chorismate biosynthesis; chorismate from D-erythrose 4-phosphate and phosphoenolpyruvate: step 5/7. Catalyzes the specific phosphorylation of the 3-hydroxyl group of shikimic acid using ATP as a cosubstrate. This Deinococcus radiodurans (strain ATCC 13939 / DSM 20539 / JCM 16871 / CCUG 27074 / LMG 4051 / NBRC 15346 / NCIMB 9279 / VKM B-1422 / R1) protein is Shikimate kinase.